A 77-amino-acid polypeptide reads, in one-letter code: Immune protein Tsi2 (77 aa).

Forms a heterotetramer with Tse2 consisting of two Tse2 dimers and two Tsi2 dimers. Formation of the complex inactivates Tse2 enzymatic activity.

Immunity protein that plays a role in preventing early activation of toxin Tse2. Binds to a large surface of Tse2 and thereby occludes the active site to specifically inhibits Tse2. This chain is Immune protein Tsi2, found in Pseudomonas aeruginosa (strain ATCC 15692 / DSM 22644 / CIP 104116 / JCM 14847 / LMG 12228 / 1C / PRS 101 / PAO1).